Consider the following 185-residue polypeptide: Ribosome-recycling factor (185 aa).

The protein belongs to the RRF family.

It is found in the cytoplasm. Its function is as follows. Responsible for the release of ribosomes from messenger RNA at the termination of protein biosynthesis. May increase the efficiency of translation by recycling ribosomes from one round of translation to another. The polypeptide is Ribosome-recycling factor (Beutenbergia cavernae (strain ATCC BAA-8 / DSM 12333 / CCUG 43141 / JCM 11478 / NBRC 16432 / NCIMB 13614 / HKI 0122)).